We begin with the raw amino-acid sequence, 440 residues long: Histidinol dehydrogenase (440 aa).

Residues Tyr-134, Gln-196, and Asn-219 each coordinate NAD(+). Positions 242, 264, and 267 each coordinate substrate. Positions 264 and 267 each coordinate Zn(2+). Active-site proton acceptor residues include Glu-332 and His-333. Positions 333, 366, 420, and 425 each coordinate substrate. Asp-366 contributes to the Zn(2+) binding site. A Zn(2+)-binding site is contributed by His-425.

It belongs to the histidinol dehydrogenase family. It depends on Zn(2+) as a cofactor.

It carries out the reaction L-histidinol + 2 NAD(+) + H2O = L-histidine + 2 NADH + 3 H(+). Its pathway is amino-acid biosynthesis; L-histidine biosynthesis; L-histidine from 5-phospho-alpha-D-ribose 1-diphosphate: step 9/9. In terms of biological role, catalyzes the sequential NAD-dependent oxidations of L-histidinol to L-histidinaldehyde and then to L-histidine. This Prochlorococcus marinus (strain SARG / CCMP1375 / SS120) protein is Histidinol dehydrogenase.